The primary structure comprises 1363 residues: MSSEEKIEETQQQQQESVPVKELLLKVQLPSFFNVGDDYLTIPSSYEENIADLKQALNIIVLCRNLTNYSILIKGIDIIENFGELITFEQIISHFELDKQEEQEEQGQEREISELKIVIKEKSYNLASIYEQISRFREVIGLHYIDRLSNDIGSCGGVSKFNGIQLDDIKPKEAKKEESTEKEQQEKEELSISKEEVSKISDFAKQFISDSFDGNDFTKLTKFDDINGKVKIPIKSLTISQWSPVPPFQQAKGDLLYLSLQTLEHETFNITCHFSGFFVNKSSTINFNPTIKINEKGKFNKSYLLYDLVCQLSPLFSKTIAENEINLSDSTKYPETYLLPGNSFPAYPWLVNEKDLQNVPDLSRSQLSSLINGVDGADYIKDWNNDIQSIKELPTTTVQERIIREKLIQKSLFEFNKTATETAINIIKGNIPPLNPDESSDKFIYLRNGIFYSSGTSTVNGFENTGGEEASRYVASKDLTGIKLINRHDIRGISSLVTCIVDYMGKRVVCQAPVPGILDTPVITSPTTDAEGKNEAEEPESEPVEKVVYGLSSDGSRILEDKSFEEPLKQIGDFFHLKPHKVQLSSSSSGDDVKTESNLVVSKDTKGLKGTDGRKYVIDLYRTTPRDIEFIEQHFKLDDDHQETSYPHGEALIRHEAVNEWWRRKVAVLFKKETEQLEKEGKLLDKNQDQDQENKPQIAIPTDQVVFNPDAFSSDNENEIEQDREEVREISKFIKEKLIEEFLDEIKDQVIPFDGQQLTDVLHRSGINMRYLGYVAERLVVKKEKHLVDLEELIKENEAKAEKKREEEKEKEEKEATESEDKKEKKEDKEDAEKEEAEAEEEVPTKATYQLTLANYSTLHRIIIQEMISRSVKHILRNLTKSLPSYLISTAIAHFHNCLFGGAINPTPKVDFIDEIYKNFCSKSDLESFIKLTHDDVIKLVSKEVFSRFRYKLSSNWINTIQLPQLFREIAFKYGIQWKSQNYPFTKEEFELQNNQNKETPTQIQIIETKSSKKSKKKTQTQVITEKSIQRSSIFIADDIIGFIPIIKDSSYKSTIVEEIYSNARSHLVQGNKEMGMALFNELLAINESIYGKVNPETAKFYNLVAQVYQELGYDIEAALIGRKAVILCERSCGFDSYDTITAYMNSAYYESSNEQYLNSLKLYKEAMNTWSLVYGKDHPTLINTLTNLSESLLKIKAYDSALELLQEALEITKKLNGEISEITGFIYYRIANIVVTLNKFKESKELFDKAYDIFMKLLGPDDSMTKQVAKYVSSVGLYVEYLKRQQQQQQQETQKKSKTKTKAAPVNNIATTSTSTTKNGKKSKKNNTPPQSNPEIANQSIDEILRFIEGKPSGSKKSNKKK.

TPR repeat units lie at residues 29-63 (LPSFFNVGDDYLTIPSSYEENIADLKQALNIIVLC) and 120-154 (KEKSYNLASIYEQISRFREVIGLHYIDRLSNDIGS). The tract at residues 172–191 (KEAKKEESTEKEQQEKEELS) is disordered. Residues 283-316 (STINFNPTIKINEKGKFNKSYLLYDLVCQLSPLF) form a TPR 3 repeat. Residues 361 to 631 (DLSRSQLSSL…RTTPRDIEFI (271 aa)) enclose the Clu domain. The tract at residues 521-544 (PVITSPTTDAEGKNEAEEPESEPV) is disordered. The TPR 4 repeat unit spans residues 548–581 (VYGLSSDGSRILEDKSFEEPLKQIGDFFHLKPHK). Positions 799-832 (AKAEKKREEEKEKEEKEATESEDKKEKKEDKEDA) are enriched in basic and acidic residues. Residues 799–844 (AKAEKKREEEKEKEEKEATESEDKKEKKEDKEDAEKEEAEAEEEVP) are disordered. The span at 833–842 (EKEEAEAEEE) shows a compositional bias: acidic residues. TPR repeat units lie at residues 1057 to 1090 (VEEIYSNARSHLVQGNKEMGMALFNELLAINESI), 1141 to 1174 (ITAYMNSAYYESSNEQYLNSLKLYKEAMNTWSLV), 1183 to 1216 (INTLTNLSESLLKIKAYDSALELLQEALEITKKL), and 1225 to 1258 (GFIYYRIANIVVTLNKFKESKELFDKAYDIFMKL). Residues 1291-1363 (QQETQKKSKT…SGSKKSNKKK (73 aa)) are disordered. Over residues 1330 to 1342 (PPQSNPEIANQSI) the composition is skewed to polar residues.

The protein belongs to the CLU family. May associate with the eukaryotic translation initiation factor 3 (eIF-3) complex.

It localises to the cytoplasm. Its function is as follows. mRNA-binding protein involved in proper cytoplasmic distribution of mitochondria. In Candida albicans (strain SC5314 / ATCC MYA-2876) (Yeast), this protein is Clustered mitochondria protein homolog.